The sequence spans 75 residues: Putative membrane protein insertion efficiency factor (75 aa).

This sequence belongs to the UPF0161 family.

It localises to the cell membrane. Functionally, could be involved in insertion of integral membrane proteins into the membrane. In Bacillus cytotoxicus (strain DSM 22905 / CIP 110041 / 391-98 / NVH 391-98), this protein is Putative membrane protein insertion efficiency factor.